Here is a 205-residue protein sequence, read N- to C-terminus: MLEARDLYCERDERTLFRGLSFTVDAGEWVQVTGGNGAGKTTLLRLLTGLARPDGGEVYWQGEPLRRVRDSFHRSLLWIGHQPGIKTRLTARENLHFFHPGDGARLPEALAQAGLAGFEDVPVAQLSAGQQRRVALARLWLTRAALWVLDEPFTAIDVNGVARLTRRMAAHTAQGGMVILTTHQPLPGAADTVRRLALTGGGAGL.

Residues 2–205 (LEARDLYCER…LALTGGGAGL (204 aa)) enclose the ABC transporter domain. 34–41 (GGNGAGKT) contacts ATP.

This sequence belongs to the ABC transporter superfamily. CcmA exporter (TC 3.A.1.107) family. As to quaternary structure, the complex is composed of two ATP-binding proteins (CcmA) and two transmembrane proteins (CcmB).

The protein resides in the cell inner membrane. It catalyses the reaction heme b(in) + ATP + H2O = heme b(out) + ADP + phosphate + H(+). Its function is as follows. Part of the ABC transporter complex CcmAB involved in the biogenesis of c-type cytochromes; once thought to export heme, this seems not to be the case, but its exact role is uncertain. Responsible for energy coupling to the transport system. This is Cytochrome c biogenesis ATP-binding export protein CcmA 1 from Salmonella typhimurium (strain LT2 / SGSC1412 / ATCC 700720).